The following is a 226-amino-acid chain: PKHD-type hydroxylase TERTU_2553 (226 aa).

The 100-residue stretch at 78 to 177 folds into the Fe2OG dioxygenase domain; it reads KIYPPKFNCY…RVASFIWIQS (100 aa). Positions 96, 98, and 158 each coordinate Fe cation. 2-oxoglutarate is bound at residue R168.

It depends on Fe(2+) as a cofactor. L-ascorbate is required as a cofactor.

In Teredinibacter turnerae (strain ATCC 39867 / T7901), this protein is PKHD-type hydroxylase TERTU_2553.